The sequence spans 253 residues: Imidazole glycerol phosphate synthase subunit HisF (253 aa).

Catalysis depends on residues Asp11 and Asp130.

Belongs to the HisA/HisF family. Heterodimer of HisH and HisF.

The protein localises to the cytoplasm. It catalyses the reaction 5-[(5-phospho-1-deoxy-D-ribulos-1-ylimino)methylamino]-1-(5-phospho-beta-D-ribosyl)imidazole-4-carboxamide + L-glutamine = D-erythro-1-(imidazol-4-yl)glycerol 3-phosphate + 5-amino-1-(5-phospho-beta-D-ribosyl)imidazole-4-carboxamide + L-glutamate + H(+). It functions in the pathway amino-acid biosynthesis; L-histidine biosynthesis; L-histidine from 5-phospho-alpha-D-ribose 1-diphosphate: step 5/9. IGPS catalyzes the conversion of PRFAR and glutamine to IGP, AICAR and glutamate. The HisF subunit catalyzes the cyclization activity that produces IGP and AICAR from PRFAR using the ammonia provided by the HisH subunit. This Dehalococcoides mccartyi (strain ATCC BAA-2100 / JCM 16839 / KCTC 5957 / BAV1) protein is Imidazole glycerol phosphate synthase subunit HisF.